A 346-amino-acid polypeptide reads, in one-letter code: Protein RecA (346 aa).

Residue 67 to 74 (GPESSGKT) coordinates ATP.

The protein belongs to the RecA family.

The protein resides in the cytoplasm. Can catalyze the hydrolysis of ATP in the presence of single-stranded DNA, the ATP-dependent uptake of single-stranded DNA by duplex DNA, and the ATP-dependent hybridization of homologous single-stranded DNAs. It interacts with LexA causing its activation and leading to its autocatalytic cleavage. This chain is Protein RecA, found in Mycobacteroides abscessus (strain ATCC 19977 / DSM 44196 / CCUG 20993 / CIP 104536 / JCM 13569 / NCTC 13031 / TMC 1543 / L948) (Mycobacterium abscessus).